Reading from the N-terminus, the 233-residue chain is NAD-dependent protein deacylase (233 aa).

In terms of domain architecture, Deacetylase sirtuin-type spans 1–230 (MKNIMILSGA…ALDIENFMKD (230 aa)). 9-28 (GAGLSAPSGLKTFRDNDGLW) contributes to the NAD(+) binding site. The substrate site is built by Tyr-53 and Arg-56. Position 88–91 (88–91 (QNVD)) interacts with NAD(+). Residue His-106 is the Proton acceptor of the active site. Zn(2+) contacts are provided by Cys-114, Cys-117, Cys-133, and Cys-136. NAD(+)-binding positions include 172–174 (GTS) and Ile-213.

This sequence belongs to the sirtuin family. Class III subfamily. The cofactor is Zn(2+).

The protein resides in the cytoplasm. The enzyme catalyses N(6)-acetyl-L-lysyl-[protein] + NAD(+) + H2O = 2''-O-acetyl-ADP-D-ribose + nicotinamide + L-lysyl-[protein]. It carries out the reaction N(6)-succinyl-L-lysyl-[protein] + NAD(+) + H2O = 2''-O-succinyl-ADP-D-ribose + nicotinamide + L-lysyl-[protein]. Functionally, NAD-dependent lysine deacetylase and desuccinylase that specifically removes acetyl and succinyl groups on target proteins. Modulates the activities of several proteins which are inactive in their acylated form. The sequence is that of NAD-dependent protein deacylase from Campylobacter jejuni (strain RM1221).